The chain runs to 88 residues: LYR motif-containing protein 2 (88 aa).

Residues 1 to 19 (MAASRLPPATLTLKQFVRR) constitute a mitochondrion transit peptide.

This sequence belongs to the complex I LYR family.

The protein resides in the mitochondrion. Its function is as follows. Involved in efficient integration of the N-module into mitochondrial respiratory chain complex I. This chain is LYR motif-containing protein 2 (LYRM2), found in Pongo abelii (Sumatran orangutan).